A 296-amino-acid chain; its full sequence is Syntenin-2 (296 aa).

PDZ domains follow at residues Glu-112–Arg-191 and Thr-196–Val-271.

As to quaternary structure, monomer and homodimer. Interacts with SDCBP. Interacts with TM4SF1.

The protein resides in the cytoplasm. It is found in the nucleus. It localises to the nucleolus. Its subcellular location is the nucleoplasm. The protein localises to the cell membrane. The protein resides in the nucleus speckle. Its function is as follows. Binds phosphatidylinositol 4,5-bisphosphate (PIP2). May play a role in the organization of nuclear PIP2, cell division and cell survival. The polypeptide is Syntenin-2 (Sdcbp2) (Rattus norvegicus (Rat)).